The primary structure comprises 474 residues: Methylenetetrahydrofolate--tRNA-(uracil-5-)-methyltransferase TrmFO (474 aa).

Position 9 to 14 (9 to 14 (GGGLAG)) interacts with FAD. Residues 425-451 (PPLERMPRNETGKRLRGPEKAALKKRA) are disordered. The segment covering 429–451 (RMPRNETGKRLRGPEKAALKKRA) has biased composition (basic and acidic residues).

This sequence belongs to the MnmG family. TrmFO subfamily. It depends on FAD as a cofactor.

It localises to the cytoplasm. The catalysed reaction is uridine(54) in tRNA + (6R)-5,10-methylene-5,6,7,8-tetrahydrofolate + NADH + H(+) = 5-methyluridine(54) in tRNA + (6S)-5,6,7,8-tetrahydrofolate + NAD(+). The enzyme catalyses uridine(54) in tRNA + (6R)-5,10-methylene-5,6,7,8-tetrahydrofolate + NADPH + H(+) = 5-methyluridine(54) in tRNA + (6S)-5,6,7,8-tetrahydrofolate + NADP(+). Catalyzes the folate-dependent formation of 5-methyl-uridine at position 54 (M-5-U54) in all tRNAs. This Methylorubrum populi (strain ATCC BAA-705 / NCIMB 13946 / BJ001) (Methylobacterium populi) protein is Methylenetetrahydrofolate--tRNA-(uracil-5-)-methyltransferase TrmFO.